The chain runs to 330 residues: DNA-directed RNA polymerase subunit alpha (330 aa).

Residues 1 to 236 are alpha N-terminal domain (alpha-NTD); that stretch reads MQNSVIEFLK…EQLEAFIDLR (236 aa). The segment at 250 to 330 is alpha C-terminal domain (alpha-CTD); it reads FDPILLRLVD…NWPPTNILDN (81 aa).

This sequence belongs to the RNA polymerase alpha chain family. In terms of assembly, homodimer. The RNAP catalytic core consists of 2 alpha, 1 beta, 1 beta' and 1 omega subunit. When a sigma factor is associated with the core the holoenzyme is formed, which can initiate transcription.

It carries out the reaction RNA(n) + a ribonucleoside 5'-triphosphate = RNA(n+1) + diphosphate. In terms of biological role, DNA-dependent RNA polymerase catalyzes the transcription of DNA into RNA using the four ribonucleoside triphosphates as substrates. This chain is DNA-directed RNA polymerase subunit alpha, found in Blochmanniella pennsylvanica (strain BPEN).